A 410-amino-acid chain; its full sequence is D-3-phosphoglycerate dehydrogenase (410 aa).

NAD(+)-binding positions include 162-163, aspartate 182, 239-241, and aspartate 265; these read HI and AAR. Arginine 241 is an active-site residue. Residue glutamate 270 is part of the active site. Histidine 293 serves as the catalytic Proton donor. Residue 293–296 coordinates NAD(+); the sequence is HIGG. The ACT domain occupies 341–410; sequence RLLHIHENRP…DGTIRARVLY (70 aa).

This sequence belongs to the D-isomer specific 2-hydroxyacid dehydrogenase family.

The catalysed reaction is (2R)-3-phosphoglycerate + NAD(+) = 3-phosphooxypyruvate + NADH + H(+). It carries out the reaction (R)-2-hydroxyglutarate + NAD(+) = 2-oxoglutarate + NADH + H(+). It functions in the pathway amino-acid biosynthesis; L-serine biosynthesis; L-serine from 3-phospho-D-glycerate: step 1/3. In bacteria displays feedback inhibition by L-serine. Functionally, catalyzes the reversible oxidation of 3-phospho-D-glycerate to 3-phosphonooxypyruvate, the first step of the phosphorylated L-serine biosynthesis pathway. Also catalyzes the reversible oxidation of 2-hydroxyglutarate to 2-oxoglutarate. The chain is D-3-phosphoglycerate dehydrogenase (serA) from Haemophilus influenzae (strain ATCC 51907 / DSM 11121 / KW20 / Rd).